A 192-amino-acid chain; its full sequence is GTP cyclohydrolase 1 (192 aa).

Zn(2+) contacts are provided by Cys76, His79, and Cys148.

The protein belongs to the GTP cyclohydrolase I family. Toroid-shaped homodecamer, composed of two pentamers of five dimers.

It carries out the reaction GTP + H2O = 7,8-dihydroneopterin 3'-triphosphate + formate + H(+). Its pathway is cofactor biosynthesis; 7,8-dihydroneopterin triphosphate biosynthesis; 7,8-dihydroneopterin triphosphate from GTP: step 1/1. The polypeptide is GTP cyclohydrolase 1 (Carboxydothermus hydrogenoformans (strain ATCC BAA-161 / DSM 6008 / Z-2901)).